The sequence spans 601 residues: Phosphomethylpyrimidine synthase (601 aa).

Disordered stretches follow at residues M1–I31 and A100–Q141. Residues A100–K112 are compositionally biased toward basic and acidic residues. Residues N208, M237, Y266, H302, S322–G324, D363–R366, and E402 contribute to the substrate site. H406 provides a ligand contact to Zn(2+). Residue Y429 coordinates substrate. H470 is a Zn(2+) binding site. Residues C550, C553, and C558 each contribute to the [4Fe-4S] cluster site.

This sequence belongs to the ThiC family. [4Fe-4S] cluster serves as cofactor.

The enzyme catalyses 5-amino-1-(5-phospho-beta-D-ribosyl)imidazole + S-adenosyl-L-methionine = 4-amino-2-methyl-5-(phosphooxymethyl)pyrimidine + CO + 5'-deoxyadenosine + formate + L-methionine + 3 H(+). The protein operates within cofactor biosynthesis; thiamine diphosphate biosynthesis. Its function is as follows. Catalyzes the synthesis of the hydroxymethylpyrimidine phosphate (HMP-P) moiety of thiamine from aminoimidazole ribotide (AIR) in a radical S-adenosyl-L-methionine (SAM)-dependent reaction. The chain is Phosphomethylpyrimidine synthase from Streptomyces avermitilis (strain ATCC 31267 / DSM 46492 / JCM 5070 / NBRC 14893 / NCIMB 12804 / NRRL 8165 / MA-4680).